A 592-amino-acid polypeptide reads, in one-letter code: uncharacterized protein (592 aa).

A run of 6 helical transmembrane segments spans residues 12 to 32, 58 to 78, 102 to 122, 191 to 211, 214 to 234, and 299 to 319; these read IWILQTLAITSVVFSFGIFLL, PILFFLLIVAMTLLSVRISLV, MGLFCVIAASSVSAALVSYYL, ISYTILLWGLAGPMIVLGVEI, MMVFLVFGYVIFTTLIAFWLG, and FSGFNLVVSQISVVFPLLIQV. In terms of domain architecture, ABC transmembrane type-1 spans 58–358; it reads PILFFLLIVA…FRSTYDNFAS (301 aa). The ABC transporter domain occupies 391–592; the sequence is VIFKNLSIQN…LQDKGQWQVL (202 aa). Residue 424–431 participates in ATP binding; that stretch reads GKSGAGKT.

Belongs to the ABC transporter superfamily.

It localises to the cell inner membrane. This is an uncharacterized protein from Haemophilus influenzae (strain ATCC 51907 / DSM 11121 / KW20 / Rd).